The following is a 755-amino-acid chain: Polyribonucleotide nucleotidyltransferase (755 aa).

Mg(2+) is bound by residues Asp493 and Asp499. Residues 560 to 619 form the KH domain; the sequence is PRIMTIQIPVDKIGALIGPGGKTIRNICDTTGAQIDIEDDGRVFITAPDGEAAKKAISMI. Residues 629–698 form the S1 motif domain; that stretch reads GDIFLGKVVS…NTGKISLSRR (70 aa). Residues 704–755 form a disordered region; sequence ETPEARKAAGAAPRPRPREEQRGGREEPRSLREELRGPRRDGERPRPRRRDD. Residues 719-755 show a composition bias toward basic and acidic residues; sequence RPREEQRGGREEPRSLREELRGPRRDGERPRPRRRDD.

It belongs to the polyribonucleotide nucleotidyltransferase family. Requires Mg(2+) as cofactor.

The protein localises to the cytoplasm. The enzyme catalyses RNA(n+1) + phosphate = RNA(n) + a ribonucleoside 5'-diphosphate. Functionally, involved in mRNA degradation. Catalyzes the phosphorolysis of single-stranded polyribonucleotides processively in the 3'- to 5'-direction. The polypeptide is Polyribonucleotide nucleotidyltransferase (Chloroflexus aggregans (strain MD-66 / DSM 9485)).